Consider the following 344-residue polypeptide: MFSSLYPLVRAQLFRMDAEDAHHLTLRLLRAAGRTGLAGALAPRVPDSPRTVMGLTFRNPVGLAAGLDKDGACIDGLAALGFGFIEVGTVTPRAQPGNPRPRMFRLPQADAVINRMGFNNAGVDQFVKNVQAARYRGTLGLNIGKNADTPIERAADDYLYCLERVYPFASYVTVNISSPNTKNLRQLQGAGELDALLAALKDKQQRLADLHGKLVPLALKIAPDLDDEQVKSIADTLLRHQFEGVIATNTTLSRTAVQGLPHADEAGGLSGRPVFDASNEVIRKLRAEVGGDVPIIGVGGIFSGADAQAKLDAGASLVQLYTGFIYRGPALVAECAQALAMRAA.

Residues 65–69 (AGLDK) and threonine 89 contribute to the FMN site. Lysine 69 contacts substrate. 114 to 118 (NRMGF) is a substrate binding site. FMN contacts are provided by asparagine 142 and asparagine 175. Asparagine 175 is a binding site for substrate. Serine 178 acts as the Nucleophile in catalysis. Substrate is bound at residue asparagine 180. The FMN site is built by lysine 220 and threonine 248. Substrate is bound at residue 249-250 (NT). FMN-binding positions include glycine 271, glycine 300, and 321 to 322 (YT).

The protein belongs to the dihydroorotate dehydrogenase family. Type 2 subfamily. Monomer. It depends on FMN as a cofactor.

The protein localises to the cell membrane. It catalyses the reaction (S)-dihydroorotate + a quinone = orotate + a quinol. Its pathway is pyrimidine metabolism; UMP biosynthesis via de novo pathway; orotate from (S)-dihydroorotate (quinone route): step 1/1. In terms of biological role, catalyzes the conversion of dihydroorotate to orotate with quinone as electron acceptor. This is Dihydroorotate dehydrogenase (quinone) from Paraburkholderia phymatum (strain DSM 17167 / CIP 108236 / LMG 21445 / STM815) (Burkholderia phymatum).